The sequence spans 274 residues: Undecaprenyl-diphosphatase (274 aa).

The next 6 membrane-spanning stretches (helical) occupy residues Ala44 to Trp64, Leu85 to Ile105, Leu109 to Ala129, Ala185 to Leu205, Val214 to Cys234, and Phe247 to Thr267.

It belongs to the UppP family.

The protein resides in the cell inner membrane. The catalysed reaction is di-trans,octa-cis-undecaprenyl diphosphate + H2O = di-trans,octa-cis-undecaprenyl phosphate + phosphate + H(+). In terms of biological role, catalyzes the dephosphorylation of undecaprenyl diphosphate (UPP). Confers resistance to bacitracin. This Variovorax paradoxus (strain S110) protein is Undecaprenyl-diphosphatase.